The following is a 187-amino-acid chain: UPF0301 protein Sala_0165 (187 aa).

It belongs to the UPF0301 (AlgH) family.

In Sphingopyxis alaskensis (strain DSM 13593 / LMG 18877 / RB2256) (Sphingomonas alaskensis), this protein is UPF0301 protein Sala_0165.